A 348-amino-acid chain; its full sequence is Protein RecA (348 aa).

Position 68–75 (68–75 (GPESSGKT)) interacts with ATP.

It belongs to the RecA family.

The protein resides in the cytoplasm. Its function is as follows. Can catalyze the hydrolysis of ATP in the presence of single-stranded DNA, the ATP-dependent uptake of single-stranded DNA by duplex DNA, and the ATP-dependent hybridization of homologous single-stranded DNAs. It interacts with LexA causing its activation and leading to its autocatalytic cleavage. This is Protein RecA from Rhodococcus opacus (strain B4).